The primary structure comprises 2507 residues: Highly reducing polyketide synthase lcsB (2507 aa).

Residues alanine 2–serine 393 enclose the Ketosynthase family 3 (KS3) domain. A disordered region spans residues asparagine 399–glutamate 501. Composition is skewed to polar residues over residues serine 405–proline 414 and asparagine 470–threonine 488. The tract at residues tryptophan 581–lysine 900 is malonyl-CoA:ACP transacylase (MAT) domain. The interval histidine 953–alanine 1080 is N-terminal hotdog fold. The dehydratase (DH) domain stretch occupies residues histidine 953–aspartate 1232. One can recognise a PKS/mFAS DH domain in the interval histidine 953–glutamate 1234. Catalysis depends on histidine 984, which acts as the Proton acceptor; for dehydratase activity. The C-terminal hotdog fold stretch occupies residues alanine 1092–glutamate 1234. The active-site Proton donor; for dehydratase activity is aspartate 1151. A methyltransferase (CMet) domain region spans residues leucine 1402–proline 1570. The interval glycine 1793–valine 2105 is enoyl reductase (ER) (ER) domain. The tract at residues serine 2130–glycine 2303 is ketoreductase (KR) domain. A Carrier domain is found at glutamate 2425–leucine 2503. Position 2463 is an O-(pantetheine 4'-phosphoryl)serine (serine 2463).

Its pathway is secondary metabolite biosynthesis. Highly reducing polyketide synthase; part of the gene cluster that mediates the biosynthesis of the lipopeptide antibiotics leucinostatins that show extensive biological activities, including antimalarial, antiviral, antibacterial, antifungal, and antitumor activities, as well as phytotoxic. Leucinostatin A contains nine amino acid residues, including the unusual amino acid 4-methyl-L-proline (MePro), 2-amino-6-hydroxy-4-methyl-8-oxodecanoic acid (AHyMeOA), 3-hydroxyleucine (HyLeu), alpha-aminoisobutyric acid (AIB), beta-Ala, a 4-methylhex-2-enoic acid at the N-terminus as well as a N1,N1-dimethylpropane-1,2-diamine (DPD) at the C-terminus. The biosynthesis of leucinostatins is probably initiated with the assembly of 4-methylhex-2-enoic acid by a reducing PKS. Two reducing polyketide synthases, lcsB and lcsC, have been identified in the cluster and it is not clear which is the one that assembles 4-methylhex-2-enoic acid since both contain KS, AT, DH, cMT, ER, KR and ACP domains. The polyketide residue might be transferred to the NRPS lcsA, mediated by two additional enzymes, the acyl-CoA ligase lcsD and the thioesterase lcsE. The linear polyketide carboxylic acid, which is released from PKS, is converted to a CoA thioester by lcsD, and then lcsE hydrolyzes the thiol bond and shuttles the polyketide intermediate to lcsA. The C domain of the first module catalyzed the condensation of 4-methylhex-2-enoic acid and MePro carried by domain A1, followed by successive condensations of nine amino acids to trigger the elongation of the linear peptide. A5 and A6 domains of lcsA are proposed to incorporate leucine, A2 AHyMeOA, and A3 incorporates HyLeu. A4, A7 and A8 incorporate AIB. The AHyMeOA in leucinostatin A activated by the A2 might be produced by the second PKS (lcsB or lcsC) present within the cluster. The MePro is probably produced via leucine cyclization and may originate from a separate pathway, independent of the cluster. Another nonproteinogenic amino acid, beta-Ala, could be produced by an aspartic acid decarboxylase also localized outside of the cluster. Two candidates are VFPBJ_01400 and VFPBJ_10476. The final peptide scaffold may be released by the NAD(P)H-dependent thioester reductase (TE) at the C-terminal region of lcsA. Transamination of the lcsA product by the transaminase lcsP may produce DPD at the C-terminus. Further hydroxylation steps performed alternatively by the cytochrome P450 monooxygenases lcsI, lcsK andr lcsN then yield the non-methylated leucinostatins precursor. It is also possible that leucines can be hydroxylated prior to their incorporation into the peptide. Varying extents of methylation then lead to the formation of leucinostatins A and B. This Purpureocillium lilacinum (Paecilomyces lilacinus) protein is Highly reducing polyketide synthase lcsB.